The following is a 134-amino-acid chain: Small ribosomal subunit protein uS8c (134 aa).

This sequence belongs to the universal ribosomal protein uS8 family. In terms of assembly, part of the 30S ribosomal subunit.

The protein resides in the plastid. Its function is as follows. One of the primary rRNA binding proteins, it binds directly to 16S rRNA central domain where it helps coordinate assembly of the platform of the 30S subunit. The protein is Small ribosomal subunit protein uS8c (rps8) of Cuscuta reflexa (Southern Asian dodder).